A 654-amino-acid chain; its full sequence is Transcription factor E2-alpha (654 aa).

The 9aaTAD signature appears at 19–27; it reads LLDFSMMFP. A disordered region spans residues 31–103; sequence TNGKGRPASL…LGPGLGGKSG (73 aa). A compositionally biased stretch (low complexity) spans 55-68; the sequence is SSGSWGSGDQSSSS. Residues 69–79 show a composition bias toward polar residues; that stretch reads FDPSRTFSEGT. The span at 84-94 shows a compositional bias: low complexity; it reads SHSSLSSSTFL. Residues S134 and S139 each carry the phosphoserine modification. Disordered stretches follow at residues 135–205, 239–268, 292–329, and 343–385; these read PGPL…SAKT, MLGG…FGGL, SFSS…GSSG, and DHSS…YDGG. Residues 147 to 156 are compositionally biased toward low complexity; that stretch reads SQYYPSYSGS. The short motif at 170-176 is the Nuclear localization signal element; sequence PKKVRKV. Positions 256-268 are enriched in low complexity; sequence VGSSGSSSTFGGL. Over residues 343-354 the composition is skewed to low complexity; sequence DHSSNNFSSSPS. Phosphothreonine is present on T355. S359 is modified (phosphoserine). R371 bears the Omega-N-methylarginine mark. Residue S379 is modified to Phosphoserine. Residues 389–425 are leucine-zipper; the sequence is LQSKIEDHLDEAIHVLRSHAVGTAGDMHTLLPGHGAL. The tract at residues 461-552 is disordered; sequence NHAALPSQPG…KAEREKERRV (92 aa). Residue K498 forms a Glycyl lysine isopeptide (Lys-Gly) (interchain with G-Cter in SUMO2) linkage. The span at 512–523 shows a compositional bias: basic and acidic residues; sequence DHSEEEKKELKA. At S529 the chain carries Phosphoserine. D531 is modified (phosphothreonine). Basic and acidic residues predominate over residues 542–552; that stretch reads QKAEREKERRV. A bHLH domain is found at 549–602; that stretch reads ERRVANNARERLRVRDINEAFKELGRMCQLHLNSEKPQTKLLILHQAVSVILNL. K625 participates in a covalent cross-link: Glycyl lysine isopeptide (Lys-Gly) (interchain with G-Cter in SUMO2). Positions 633–654 are disordered; the sequence is PQMVLSAPHPGLSEAHNPAGHM.

As to quaternary structure, homodimer. Heterodimer; efficient DNA binding requires dimerization with another bHLH protein. Forms a heterodimer with ASH1, TWIST1 and TWIST2. Forms a heterodimer with MYOG; heterodimerization enhances MYOG DNA-binding and transcriptional activities. Forms a heterodimer with NEUROD1; the heterodimer is inhibited in presence of ID2, but not NR0B2, to E-box element. Forms a heterodimer with TCF15; the heterodimer binds E-box element. Forms a heterodimer with ATOH8; repress transcription of TCF3 and TCF3/NEUROG3 dimer-induced transactivation of E box-dependent promoters. Component of a nuclear TAL-1 complex composed at least of CBFA2T3, LDB1, TAL1 and TCF3. Interacts with NEUROD2, PTF1A and TGFB1I1. Interacts with EP300 and UBE2I. Interacts with BHLHA9. Interacts with ASB2; the interaction is mediated by SKP2 and targets TCF3 for Notch-induced proteasomal degradation. In terms of assembly, forms a heterodimer with ATOH7; required for ATOH7 DNA-binding. Interacts with RALGAPA1 and FIGLA. Phosphorylated following NGF stimulation. In terms of processing, undergoes Notch-induced ubiquitination and subsequent proteasomal degradation which is mediated by ASB1 or ASB2, the substrate-recognition components of probable ECS E3 ubiquitin-protein ligase complexes.

Its subcellular location is the nucleus. Functionally, transcriptional regulator involved in the initiation of neuronal differentiation and mesenchymal to epithelial transition. Heterodimers between TCF3 and tissue-specific basic helix-loop-helix (bHLH) proteins play major roles in determining tissue-specific cell fate during embryogenesis, like muscle or early B-cell differentiation. Together with TCF15, required for the mesenchymal to epithelial transition. Dimers bind DNA on E-box motifs: 5'-CANNTG-3'. Binds to the kappa-E2 site in the kappa immunoglobulin gene enhancer. Binds to IEB1 and IEB2, which are short DNA sequences in the insulin gene transcription control region. In terms of biological role, facilitates ATOH7 binding to DNA at the consensus sequence 5'-CAGGTG-3', and positively regulates transcriptional activity. This chain is Transcription factor E2-alpha (TCF3), found in Homo sapiens (Human).